The sequence spans 869 residues: MDQDIKTIIQYPTGATEFDIPFDYLSRKFVRVSLVSDDNRRLLRNITEYRYVSKTRVKILVDTTGFDRVEIRRFTSASERVVDFSDGSVLRANDLNVSQLQSSHIAEEARDSALLAMPEDDAGNLDARNRKIVRLAPGEVGTDAVNKDQLDTTLGEAGGILSEIKQTQQDIGDYIEEFANGTTYLKNIVMVYNQGSANGGETAIVLDRTDEVFAVPVIYINGDRQEVGFQFSYDNTTKTITLVKPLQRGDFVVMLTSEGTHSLASILAGPDGASRIGASGGLTVQQAIDRILESHIILPQWFGARGDWSDTTNTGTDDTAAFEAAIEMAVTLNYTEVYVPAGSYLITRELNLNGGNRNTRLGARIRGAGWASSVLVFKAPAPETPCISIIGTPGSHTSKGVEKLLIKSHPSTTGQGIGILCRNTCFAHVTEFLIANMNIGICLENYMTAGSFTEFCYFTNGRLFTNNINIQFNKVQNGDNSFHGSNFKNIQNQVKKNGGIGVQIVGNPQGAAYLYNMTWDMQFFGGAGCIAMDLNYCNTDYVGGKLTGESDLTFKADGNSRFDFHGRFDSIGKVIWDTATEGARTGGTYVFANRTSLENAVMTNADAGRLPAGVSARPLPADWADRNNNGVYPATFHIRGPNIESMGFVTYDSPGNGFFFGQLPFQGNIKDFNPRFWFNSGGTSFNTAATAYTMKLVNGEGLYFSDTTIRALSDGNVSLGEWNRRFKEARFTSWDIGTSIVPTSTATKDIGTNSNRIRDIYLANSPNVTSDSRKKSFIKPIDEALLDAWETIPFSQWKLNDSVAEKGSEARWHVGYIAQKVEESLQAFGLNAGDYGLITIGDDGFMLRMEECLVVEAAMIRRKLGLTYK.

The Peptidase S74 domain maps to 770–869; it reads SDSRKKSFIK…IRRKLGLTYK (100 aa).

The protein in the N-terminal section; belongs to the Teseptimavirus fiber family. In terms of assembly, homotrimer. Interacts (via N-terminus) with depolymerase 2 (via N-terminus); this interaction probably gives rise to a branched tailspike. Post-translationally, proteolytic cleavage and release of the chaperone in the host cytosol stabilizes the folded protein. The cleavage gives rise to the mature tail spike protein but is not essential for catalytic activity.

The protein localises to the virion. Its function is as follows. Functions as a receptor binding protein (RBP) and probably mediates the attachment to the host capsular exopolysaccharides. Displays a depolymerase activity that specifically degrades the K3-type polysaccharides of Klebsiella pneumoniae capsule, which allows the phage to reach the host cell membrane and bind the entry receptor. The polypeptide is Depolymerase 1, capsule K3-specific (Klebsiella pneumoniae (Bacteriophage KP32)).